Here is a 304-residue protein sequence, read N- to C-terminus: tRNA pseudouridine synthase B (304 aa).

The active-site Nucleophile is the D38.

Belongs to the pseudouridine synthase TruB family. Type 1 subfamily.

The enzyme catalyses uridine(55) in tRNA = pseudouridine(55) in tRNA. Its function is as follows. Responsible for synthesis of pseudouridine from uracil-55 in the psi GC loop of transfer RNAs. This is tRNA pseudouridine synthase B from Geobacter sulfurreducens (strain ATCC 51573 / DSM 12127 / PCA).